The following is a 428-amino-acid chain: UPF0053 inner membrane protein YfjD (428 aa).

At 1-3 the chain is on the cytoplasmic side; the sequence is MEH. Positions 2-192 constitute a CNNM transmembrane domain; the sequence is EHISTTTLII…SQISRRNQDM (191 aa). Residues 4–24 traverse the membrane as a helical segment; it reads ISTTTLIIILIIMVVISAYFS. The Periplasmic portion of the chain corresponds to 25–64; sequence GSETGMMTLNRYRLRHMAKQGNRSAKRVEKLLRKPDRLIS. The chain crosses the membrane as a helical span at residues 65-85; it reads LVLIGNNLVNILASALGTIVG. The Cytoplasmic segment spans residues 86–91; the sequence is MRLYGD. Residues 92–112 traverse the membrane as a helical segment; sequence AGVAIATGVLTFVVLVFAEVL. The Periplasmic portion of the chain corresponds to 113-129; the sequence is PKTIAALYPEKVAYPSS. The chain crosses the membrane as a helical span at residues 130-150; the sequence is FLLAPLQILMMPLVWLLNAIT. Residues 151-428 are Cytoplasmic-facing; sequence RMLMRMMGIK…VKPLRESVAE (278 aa). CBS domains lie at 208-270 and 272-332; these read MVPR…FTKE and MLRA…FTTS.

It belongs to the UPF0053 family.

The protein resides in the cell inner membrane. The sequence is that of UPF0053 inner membrane protein YfjD (yfjD) from Escherichia coli (strain K12).